A 278-amino-acid chain; its full sequence is Putative transposase for insertion sequence element IS986/IS6110 (278 aa).

Residues 101-268 (GPPAPNRLWV…VPPVELEAAY (168 aa)) form the Integrase catalytic domain.

In terms of biological role, involved in the transposition of the insertion sequence. The protein is Putative transposase for insertion sequence element IS986/IS6110 of Mycobacterium bovis (strain ATCC BAA-935 / AF2122/97).